A 271-amino-acid polypeptide reads, in one-letter code: ATP synthase subunit a (271 aa).

5 helical membrane passes run 40–60 (TINIDSMFFSVVLGLLFLVLF), 100–120 (LIAPLALTIFVWVFLMNLMDL), 146–166 (DVNVTLSMALGVFILILFYSI), 220–240 (LIFILIAGLLPWWSQWILNVP), and 242–262 (AIFHILIITLQAFIFMVLTIV).

It belongs to the ATPase A chain family. As to quaternary structure, F-type ATPases have 2 components, CF(1) - the catalytic core - and CF(0) - the membrane proton channel. CF(1) has five subunits: alpha(3), beta(3), gamma(1), delta(1), epsilon(1). CF(0) has three main subunits: a(1), b(2) and c(9-12). The alpha and beta chains form an alternating ring which encloses part of the gamma chain. CF(1) is attached to CF(0) by a central stalk formed by the gamma and epsilon chains, while a peripheral stalk is formed by the delta and b chains.

Its subcellular location is the cell inner membrane. Key component of the proton channel; it plays a direct role in the translocation of protons across the membrane. In Escherichia coli O8 (strain IAI1), this protein is ATP synthase subunit a.